The following is a 129-amino-acid chain: Large ribosomal subunit protein uL22 (129 aa).

Belongs to the universal ribosomal protein uL22 family. As to quaternary structure, part of the 50S ribosomal subunit.

This protein binds specifically to 23S rRNA; its binding is stimulated by other ribosomal proteins, e.g. L4, L17, and L20. It is important during the early stages of 50S assembly. It makes multiple contacts with different domains of the 23S rRNA in the assembled 50S subunit and ribosome. Its function is as follows. The globular domain of the protein is located near the polypeptide exit tunnel on the outside of the subunit, while an extended beta-hairpin is found that lines the wall of the exit tunnel in the center of the 70S ribosome. In Beijerinckia indica subsp. indica (strain ATCC 9039 / DSM 1715 / NCIMB 8712), this protein is Large ribosomal subunit protein uL22.